A 125-amino-acid chain; its full sequence is Ribosome-binding factor A (125 aa).

This sequence belongs to the RbfA family. In terms of assembly, monomer. Binds 30S ribosomal subunits, but not 50S ribosomal subunits or 70S ribosomes.

It localises to the cytoplasm. One of several proteins that assist in the late maturation steps of the functional core of the 30S ribosomal subunit. Associates with free 30S ribosomal subunits (but not with 30S subunits that are part of 70S ribosomes or polysomes). Required for efficient processing of 16S rRNA. May interact with the 5'-terminal helix region of 16S rRNA. The polypeptide is Ribosome-binding factor A (Desulfitobacterium hafniense (strain DSM 10664 / DCB-2)).